The chain runs to 401 residues: Large ribosomal subunit protein uL3 (401 aa).

A disordered region spans residues 1–21 (MSHRKFSAPRHGHMGFTPKKR).

Belongs to the universal ribosomal protein uL3 family.

Its subcellular location is the cytoplasm. Functionally, the L3 protein is a component of the large subunit of cytoplasmic ribosomes. This Caenorhabditis briggsae protein is Large ribosomal subunit protein uL3 (rpl-3).